The chain runs to 478 residues: Proline--tRNA ligase (478 aa).

It belongs to the class-II aminoacyl-tRNA synthetase family. ProS type 3 subfamily. As to quaternary structure, homodimer.

It localises to the cytoplasm. It catalyses the reaction tRNA(Pro) + L-proline + ATP = L-prolyl-tRNA(Pro) + AMP + diphosphate. Its function is as follows. Catalyzes the attachment of proline to tRNA(Pro) in a two-step reaction: proline is first activated by ATP to form Pro-AMP and then transferred to the acceptor end of tRNA(Pro). In Oceanobacillus iheyensis (strain DSM 14371 / CIP 107618 / JCM 11309 / KCTC 3954 / HTE831), this protein is Proline--tRNA ligase.